The following is a 271-amino-acid chain: GPN-loop GTPase 3 (271 aa).

13 to 18 contributes to the GTP binding site; the sequence is GAGKST. The Gly-Pro-Asn (GPN)-loop; involved in dimer interface motif lies at 70–72; that stretch reads GPN. 173-176 provides a ligand contact to GTP; it reads SKLD.

This sequence belongs to the GPN-loop GTPase family. As to quaternary structure, heterodimers with GPN1 or GPN2. Binds to RNA polymerase II (RNAPII).

In terms of biological role, small GTPase required for proper nuclear import of RNA polymerase II and III (RNAPII and RNAPIII). May act at an RNAP assembly step prior to nuclear import. In Kluyveromyces lactis (strain ATCC 8585 / CBS 2359 / DSM 70799 / NBRC 1267 / NRRL Y-1140 / WM37) (Yeast), this protein is GPN-loop GTPase 3.